A 316-amino-acid chain; its full sequence is Thymidylate synthase (316 aa).

DUMP contacts are provided by residues Arg-23 and 178 to 179; that span reads RR. Cys-198 serves as the catalytic Nucleophile. DUMP is bound by residues 218 to 221, Asn-229, and 259 to 261; these read RSAD and HIY. Asp-221 provides a ligand contact to (6R)-5,10-methylene-5,6,7,8-tetrahydrofolate. Ala-315 contributes to the (6R)-5,10-methylene-5,6,7,8-tetrahydrofolate binding site.

It belongs to the thymidylate synthase family. Bacterial-type ThyA subfamily. In terms of assembly, homodimer.

It localises to the cytoplasm. It catalyses the reaction dUMP + (6R)-5,10-methylene-5,6,7,8-tetrahydrofolate = 7,8-dihydrofolate + dTMP. It participates in pyrimidine metabolism; dTTP biosynthesis. Catalyzes the reductive methylation of 2'-deoxyuridine-5'-monophosphate (dUMP) to 2'-deoxythymidine-5'-monophosphate (dTMP) while utilizing 5,10-methylenetetrahydrofolate (mTHF) as the methyl donor and reductant in the reaction, yielding dihydrofolate (DHF) as a by-product. This enzymatic reaction provides an intracellular de novo source of dTMP, an essential precursor for DNA biosynthesis. This Levilactobacillus brevis (strain ATCC 367 / BCRC 12310 / CIP 105137 / JCM 1170 / LMG 11437 / NCIMB 947 / NCTC 947) (Lactobacillus brevis) protein is Thymidylate synthase.